We begin with the raw amino-acid sequence, 323 residues long: tRNA U34 carboxymethyltransferase (323 aa).

Carboxy-S-adenosyl-L-methionine contacts are provided by residues lysine 91, tryptophan 105, lysine 110, glycine 130, 152–154 (DPS), 181–182 (IE), methionine 196, tyrosine 200, and arginine 315.

Belongs to the class I-like SAM-binding methyltransferase superfamily. CmoB family. Homotetramer.

The catalysed reaction is carboxy-S-adenosyl-L-methionine + 5-hydroxyuridine(34) in tRNA = 5-carboxymethoxyuridine(34) in tRNA + S-adenosyl-L-homocysteine + H(+). Catalyzes carboxymethyl transfer from carboxy-S-adenosyl-L-methionine (Cx-SAM) to 5-hydroxyuridine (ho5U) to form 5-carboxymethoxyuridine (cmo5U) at position 34 in tRNAs. The sequence is that of tRNA U34 carboxymethyltransferase from Vibrio campbellii (strain ATCC BAA-1116).